Here is a 217-residue protein sequence, read N- to C-terminus: Large ribosomal subunit protein uL3 (217 aa).

Residue Gln-152 is modified to N5-methylglutamine.

It belongs to the universal ribosomal protein uL3 family. As to quaternary structure, part of the 50S ribosomal subunit. Forms a cluster with proteins L14 and L19. Methylated by PrmB.

Its function is as follows. One of the primary rRNA binding proteins, it binds directly near the 3'-end of the 23S rRNA, where it nucleates assembly of the 50S subunit. The protein is Large ribosomal subunit protein uL3 of Blochmanniella pennsylvanica (strain BPEN).